A 282-amino-acid polypeptide reads, in one-letter code: Pantothenate synthetase (282 aa).

30-37 (MGYLHEGH) is a binding site for ATP. Residue His-37 is the Proton donor of the active site. A (R)-pantoate-binding site is contributed by Gln-61. Gln-61 serves as a coordination point for beta-alanine. 147-150 (GQKD) provides a ligand contact to ATP. (R)-pantoate is bound at residue Gln-153. Residues Val-176 and 184–187 (MSSR) each bind ATP.

It belongs to the pantothenate synthetase family. As to quaternary structure, homodimer.

The protein resides in the cytoplasm. The catalysed reaction is (R)-pantoate + beta-alanine + ATP = (R)-pantothenate + AMP + diphosphate + H(+). It functions in the pathway cofactor biosynthesis; (R)-pantothenate biosynthesis; (R)-pantothenate from (R)-pantoate and beta-alanine: step 1/1. Catalyzes the condensation of pantoate with beta-alanine in an ATP-dependent reaction via a pantoyl-adenylate intermediate. This chain is Pantothenate synthetase, found in Pelotomaculum thermopropionicum (strain DSM 13744 / JCM 10971 / SI).